The primary structure comprises 141 residues: Large-conductance mechanosensitive channel (141 aa).

The next 3 membrane-spanning stretches (helical) occupy residues 16 to 36, 40 to 60, and 86 to 106; these read VIDL…VDSV, LIMP…MFIV, and GNFL…FLMV.

This sequence belongs to the MscL family. As to quaternary structure, homopentamer.

The protein localises to the cell inner membrane. Channel that opens in response to stretch forces in the membrane lipid bilayer. May participate in the regulation of osmotic pressure changes within the cell. The sequence is that of Large-conductance mechanosensitive channel from Cupriavidus necator (strain ATCC 17699 / DSM 428 / KCTC 22496 / NCIMB 10442 / H16 / Stanier 337) (Ralstonia eutropha).